The sequence spans 526 residues: NAD(P)H-quinone oxidoreductase chain 4 2 (526 aa).

Helical transmembrane passes span 6 to 26 (FPWLSTIILFPIIAALFLPLI), 36 to 56 (WYALTIGLIDFVIIVTAFYTG), 91 to 111 (LILLTGFITTLAILAAWPVSF), 113 to 133 (PKLFYFLMLLMYGGQIAVFAV), 137 to 157 (LLFFFTWELELVPVYLILSIW), 169 to 189 (FILYTAGGSLFILIAALTMAF), 212 to 232 (LLLYGGLLIAYGVKLPIFPLH), 243 to 263 (TAPAHMLLAGILLKMGGYALL), 275 to 295 (ALFGPVLVILGVVNIVYAALT), 306 to 326 (IAYSSISHMGFVLIGMASFTD), 332 to 352 (AMLQMISHGLIGASLFFMVGA), 375 to 397 (IFAMWTTCSMASLALPGMSGFVA), 417 to 437 (VIIVFLAAVGVILTPIYLLSM), and 464 to 484 (VFVIACLLIPIIGIGLYPKAV).

This sequence belongs to the complex I subunit 4 family.

The protein resides in the cellular thylakoid membrane. It catalyses the reaction a plastoquinone + NADH + (n+1) H(+)(in) = a plastoquinol + NAD(+) + n H(+)(out). The catalysed reaction is a plastoquinone + NADPH + (n+1) H(+)(in) = a plastoquinol + NADP(+) + n H(+)(out). NDH-1 shuttles electrons from NAD(P)H, via FMN and iron-sulfur (Fe-S) centers, to quinones in the respiratory chain. The immediate electron acceptor for the enzyme in this species is believed to be plastoquinone. Couples the redox reaction to proton translocation (for every two electrons transferred, four hydrogen ions are translocated across the cytoplasmic membrane), and thus conserves the redox energy in a proton gradient. The polypeptide is NAD(P)H-quinone oxidoreductase chain 4 2 (Picosynechococcus sp. (strain ATCC 27264 / PCC 7002 / PR-6) (Agmenellum quadruplicatum)).